Consider the following 412-residue polypeptide: Tyrosine--tRNA ligase (412 aa).

Y38 contacts L-tyrosine. A 'HIGH' region motif is present at residues 43 to 52 (CTANSLHIGS). The L-tyrosine site is built by Y170 and Q174. A 'KMSKS' region motif is present at residues 230–234 (KMGKT). K233 is an ATP binding site. The S4 RNA-binding domain maps to 343-409 (IPISKLLHMW…CGKKRRLKVV (67 aa)).

The protein belongs to the class-I aminoacyl-tRNA synthetase family. TyrS type 1 subfamily. As to quaternary structure, homodimer.

It localises to the cytoplasm. It catalyses the reaction tRNA(Tyr) + L-tyrosine + ATP = L-tyrosyl-tRNA(Tyr) + AMP + diphosphate + H(+). Catalyzes the attachment of tyrosine to tRNA(Tyr) in a two-step reaction: tyrosine is first activated by ATP to form Tyr-AMP and then transferred to the acceptor end of tRNA(Tyr). The sequence is that of Tyrosine--tRNA ligase from Anaplasma phagocytophilum (strain HZ).